We begin with the raw amino-acid sequence, 216 residues long: 3-isopropylmalate dehydratase small subunit (216 aa).

Belongs to the LeuD family. LeuD type 1 subfamily. Heterodimer of LeuC and LeuD.

The enzyme catalyses (2R,3S)-3-isopropylmalate = (2S)-2-isopropylmalate. The protein operates within amino-acid biosynthesis; L-leucine biosynthesis; L-leucine from 3-methyl-2-oxobutanoate: step 2/4. In terms of biological role, catalyzes the isomerization between 2-isopropylmalate and 3-isopropylmalate, via the formation of 2-isopropylmaleate. The sequence is that of 3-isopropylmalate dehydratase small subunit from Acinetobacter baylyi (strain ATCC 33305 / BD413 / ADP1).